A 110-amino-acid polypeptide reads, in one-letter code: V-type proton ATPase subunit F (110 aa).

This sequence belongs to the V-ATPase F subunit family. In terms of assembly, V-ATPase is a heteromultimeric enzyme made up of two complexes: the ATP-hydrolytic V1 complex and the proton translocation V0 complex. The V1 complex consists of three catalytic AB heterodimers that form a heterohexamer, three peripheral stalks each consisting of EG heterodimers, one central rotor including subunits D and F, and the regulatory subunits C and H. The proton translocation complex V0 consists of the proton transport subunit a, a ring of proteolipid subunits c9c'', rotary subunit d, subunits e and f, and two accessory subunits.

Functionally, subunit of the V1 complex of vacuolar(H+)-ATPase (V-ATPase), a multisubunit enzyme composed of a peripheral complex (V1) that hydrolyzes ATP and a membrane integral complex (V0) that translocates protons. V-ATPase is responsible for acidifying and maintaining the pH of intracellular compartments and in some cell types, is targeted to the plasma membrane, where it is responsible for acidifying the extracellular environment. This is V-type proton ATPase subunit F (atp6s14) from Xenopus laevis (African clawed frog).